A 58-amino-acid polypeptide reads, in one-letter code: Large ribosomal subunit protein uL30 (58 aa).

The protein belongs to the universal ribosomal protein uL30 family. In terms of assembly, part of the 50S ribosomal subunit.

This Vibrio vulnificus (strain CMCP6) protein is Large ribosomal subunit protein uL30.